Reading from the N-terminus, the 441-residue chain is UDP-N-acetylglucosamine 1-carboxyvinyltransferase 1 (441 aa).

42-43 (KN) lines the phosphoenolpyruvate pocket. R117 is a UDP-N-acetyl-alpha-D-glucosamine binding site. The active-site Proton donor is the C141. Residue C141 is modified to 2-(S-cysteinyl)pyruvic acid O-phosphothioketal. Residues D330 and I352 each contribute to the UDP-N-acetyl-alpha-D-glucosamine site.

This sequence belongs to the EPSP synthase family. MurA subfamily.

It localises to the cytoplasm. The enzyme catalyses phosphoenolpyruvate + UDP-N-acetyl-alpha-D-glucosamine = UDP-N-acetyl-3-O-(1-carboxyvinyl)-alpha-D-glucosamine + phosphate. It functions in the pathway cell wall biogenesis; peptidoglycan biosynthesis. Functionally, cell wall formation. Adds enolpyruvyl to UDP-N-acetylglucosamine. In Symbiobacterium thermophilum (strain DSM 24528 / JCM 14929 / IAM 14863 / T), this protein is UDP-N-acetylglucosamine 1-carboxyvinyltransferase 1.